Reading from the N-terminus, the 525-residue chain is WD repeat-containing protein JIP5 (525 aa).

WD repeat units follow at residues 28–69, 121–160, 211–251, 270–310, and 358–398; these read VFDE…RILN, RHKGSVRGMSFNNDGSKLYTIGIDNVLKKANSLTGKVMKK, HNGD…ESDA, QEDE…LVDQ, and RKHS…DDEE. The segment at 396–525 is disordered; it reads DEEGKINESY…EHGIRKFEGL (130 aa). Positions 410–424 are enriched in acidic residues; it reads SDNDNGFDSDADSNS. Residues 425 to 435 are compositionally biased toward low complexity; the sequence is DSESVSSSDVD. Residues 463–484 are compositionally biased toward basic and acidic residues; it reads SKDELLAELEKDLQSSDEDSKH. Basic residues predominate over residues 485-501; the sequence is YTKRTKSTQPKKLKKQK. Residues 513–525 are compositionally biased toward basic and acidic residues; that stretch reads QKHEHGIRKFEGL.

This sequence belongs to the WD repeat WDR55 family.

Its subcellular location is the nucleus. The protein localises to the nucleolus. This is WD repeat-containing protein JIP5 (JIP5) from Kluyveromyces lactis (strain ATCC 8585 / CBS 2359 / DSM 70799 / NBRC 1267 / NRRL Y-1140 / WM37) (Yeast).